The chain runs to 1886 residues: MARASLVQPALWALLLLQVVGPAAAAKLNIPKVLLPFTRATRVNFTLEASEGCYRWSSTRPEVASIEPLGSSEQQCSQKAVVQARLTQPARLTSIIFAEDITTGQVLRCDAIVDLIHGIQIVSTTRELYLEDSPLELKIQALDSEGNTFSTLAGLVFDWTIVKDTEANGFSDSHNALRILTFLESTYIPPSYISEMEKAAKQGDTILVSGMKTGSSKLKARIQEAVYKNVRPAEVRLLILENILLNPAYDVYLLVGTSIHYKVQKIRQGKITELSMPSDQYELQLQNSIPDPQGDPARPVAILTQDTSRVTAMQMGQSNLVLGHRSIRMQGASRLPNSTIYVVEAGYLGFTVYPGDRWVLETGHLYAITIEVFDRSSNKVYPSDNIRIEAVLPAEFFEVLSSSQNGSYHHIRAIQSGQTAISATLTSVVDQDGGVHVLQVPVWNQQEVDIHIPITLYPSILTFPWQPKTGAYQYTIKAHGGSGNFSWSSSSSMVATVTVKGVMTTSGDTGLSVIRAHDVQNPLHFGEMKVYVIEPSSMEFAPCQVEARVGHTLELPLTISGFMPGGGSEVVTLSDCSHFDLVVEVENQGVFQPLPGRLPPGPEHCSGVKVKADAQGSTTLLVSYTHGHVHLDAKITLAAYLPLKAVDPSSVAVVTLGSSKEMLFEGGPRPWVLEPSKFFRNVTSEDTGSISLSLLGPPASRNYQQHRVLMTCQALGEQVIALSVGNRPSLSNPFPAVEPTVVKSICAPPSRLTLMPVYALPQLDLSCPLLQQNKQVVPVSSHRNPLLDLGAYDQQGRRFDNFSSLSIQWESSRPLLASIELDQPMQLVSQDDGNGQKKLHGLQTVSVHEASGTTAISATATGYQQSHLSEARVKQPHDPLVPVSASIELILVEDVRVSPEEMTIYNHPGVQVELYITEGSGYFFLNTSTQDIIKVAYQDTRGVALVHPLLPGSSTVMVHDLCLAFPAPAKAIIHVSDIQELYVRVVDKVEIGKAVKAYVRVLDFYKKPFLAKYFTFMDLKLQAASQIITLVTLDEALDNYTATFLVHGVAIGQTSLSASVTDKSGQRVSSTPQQIEVFPPFRLIPRKVTLIIGAMMQITSEGGPQPQSNILFSINNESVAAVSSSGLVRGLMVGNGSVLGVVQAVDAETGKVIIVSQDLVEVEVLQLQAVRIRAPITRMRTGTQMPVFVTGITSNQSPFSFGNAVPGLTFHWSVTKRDVLDLRGRHHEVSIRLPPQYNFAMNVYGRVKGRTGLRVVVKALDPTAGQLHGLGKELSDEIQIQVFEKLRLLNPEIEAEQILMSPNSFIKLQTNRDGAAILSYRVLDGPEKAPIVHTDEKGFLVSGSGIGVSTLEVIAQEPFGTNQTILVAVKVSPVSYLRISMSPVLHTQHKEALTALPLGMTVTFIVHFHDSSGDIFHAHNSVLNFATNRDDFVQIGKGATNNTCIIRTVSVGLTLLHVWDVEHLGLSDFVPLPVLQAITPELSGAVVVGDILCLASVLTSLGGVSGTWSSSASHVLYVDPKTGVAIARDAGSVTVYYEIAGQLKTFKEIVVGTPQKIVARRLHSAQTSIQEATASKVTVSVGDRSSNLLGECSPAQREAIEALHPESLISCQLQFKQDVFDFPACDVFTVEPGFDAALGQYLCSVTMRRLTDKQLKHLNMKKTSLAVTASIPSSYTSVEKVGAEVPFSPGLYANQAEILLSNHYTSSEVKVFGAVESLENLEVKSGSPAVLAFVKEKSFGLPSFITYTVGVLDPTAGSQGPLSTALTFSSPATNQAITIPVTVAFVLDRRGPGPYGASLLSHFLDSYQVMFFTFFALLAGTAVTIIAYHTVCAPRELASPLALTPRASPQHSPHYLASSPAAFNTLPSGRKASPPSGLWSPAYASH.

The N-terminal stretch at 1-26 (MARASLVQPALWALLLLQVVGPAAAA) is a signal peptide. Residues 27–1808 (KLNIPKVLLP…LLSHFLDSYQ (1782 aa)) lie on the Perinuclear space side of the membrane. 12 N-linked (GlcNAc...) asparagine glycosylation sites follow: asparagine 44, asparagine 337, asparagine 405, asparagine 484, asparagine 681, asparagine 801, asparagine 926, asparagine 1039, asparagine 1116, asparagine 1135, asparagine 1362, and asparagine 1441. Residues 1078–1151 (FPPFRLIPRK…VQAVDAETGK (74 aa)) enclose the BIG2 domain. The chain crosses the membrane as a helical span at residues 1809-1829 (VMFFTFFALLAGTAVTIIAYH). Residues 1830–1886 (TVCAPRELASPLALTPRASPQHSPHYLASSPAAFNTLPSGRKASPPSGLWSPAYASH) are Cytoplasmic-facing. Residue serine 1839 is modified to Phosphoserine. Position 1844 is a phosphothreonine (threonine 1844). 4 positions are modified to phosphoserine: serine 1873, serine 1876, serine 1880, and serine 1885.

The protein belongs to the NUP210 family. Forms dimers and possibly higher-order oligomers. Post-translationally, N-glycosylated, but not all potential glycosylation sites may be used. Contains high-mannose type oligosaccharides. Phosphorylated at Ser-1880 in mitosis specifically; not phosphorylated in interphase.

The protein localises to the nucleus. The protein resides in the nuclear pore complex. It is found in the nucleus membrane. Its subcellular location is the endoplasmic reticulum membrane. Its function is as follows. Nucleoporin essential for nuclear pore assembly and fusion, nuclear pore spacing, as well as structural integrity. This is Nuclear pore membrane glycoprotein 210 (Nup210) from Mus musculus (Mouse).